The chain runs to 246 residues: Ribosomal RNA small subunit methyltransferase J (246 aa).

Residues 115 to 116 (ER) and Asp169 each bind S-adenosyl-L-methionine.

This sequence belongs to the methyltransferase superfamily. RsmJ family.

The protein resides in the cytoplasm. It carries out the reaction guanosine(1516) in 16S rRNA + S-adenosyl-L-methionine = N(2)-methylguanosine(1516) in 16S rRNA + S-adenosyl-L-homocysteine + H(+). Specifically methylates the guanosine in position 1516 of 16S rRNA. This chain is Ribosomal RNA small subunit methyltransferase J, found in Buchnera aphidicola subsp. Acyrthosiphon pisum (strain APS) (Acyrthosiphon pisum symbiotic bacterium).